Consider the following 414-residue polypeptide: Esterase FrsA (414 aa).

This sequence belongs to the FrsA family.

The catalysed reaction is a carboxylic ester + H2O = an alcohol + a carboxylate + H(+). Catalyzes the hydrolysis of esters. This is Esterase FrsA from Escherichia coli O7:K1 (strain IAI39 / ExPEC).